The sequence spans 102 residues: Co-chaperonin GroES (102 aa).

This sequence belongs to the GroES chaperonin family. In terms of assembly, heptamer of 7 subunits arranged in a ring. Interacts with the chaperonin GroEL.

The protein resides in the cytoplasm. Functionally, together with the chaperonin GroEL, plays an essential role in assisting protein folding. The GroEL-GroES system forms a nano-cage that allows encapsulation of the non-native substrate proteins and provides a physical environment optimized to promote and accelerate protein folding. GroES binds to the apical surface of the GroEL ring, thereby capping the opening of the GroEL channel. This Chlamydia caviae (strain ATCC VR-813 / DSM 19441 / 03DC25 / GPIC) (Chlamydophila caviae) protein is Co-chaperonin GroES.